Reading from the N-terminus, the 334-residue chain is uncharacterized protein (334 aa).

The protein belongs to the MG414/MG415 family.

This is an uncharacterized protein from Mycoplasma pneumoniae (strain ATCC 29342 / M129 / Subtype 1) (Mycoplasmoides pneumoniae).